We begin with the raw amino-acid sequence, 269 residues long: Protein MGF 360-15R (269 aa).

It belongs to the asfivirus MGF 360 family.

Functionally, plays a role in virus cell tropism, and may be required for efficient virus replication in macrophages. In African swine fever virus (isolate Pig/Kenya/KEN-50/1950) (ASFV), this protein is Protein MGF 360-15R.